We begin with the raw amino-acid sequence, 408 residues long: Imidazolonepropionase (408 aa).

Residues His66 and His68 each coordinate Fe(3+). Zn(2+) contacts are provided by His66 and His68. Arg75, Tyr138, and His171 together coordinate 4-imidazolone-5-propanoate. An N-formimidoyl-L-glutamate-binding site is contributed by Tyr138. Residue His236 coordinates Fe(3+). His236 is a binding site for Zn(2+). Gln239 contributes to the 4-imidazolone-5-propanoate binding site. Asp311 is a binding site for Fe(3+). Residue Asp311 participates in Zn(2+) binding. Residues Asn313 and Gly315 each coordinate N-formimidoyl-L-glutamate. Residue Ser316 coordinates 4-imidazolone-5-propanoate.

This sequence belongs to the metallo-dependent hydrolases superfamily. HutI family. Zn(2+) serves as cofactor. Requires Fe(3+) as cofactor.

It is found in the cytoplasm. The catalysed reaction is 4-imidazolone-5-propanoate + H2O = N-formimidoyl-L-glutamate. Its pathway is amino-acid degradation; L-histidine degradation into L-glutamate; N-formimidoyl-L-glutamate from L-histidine: step 3/3. Functionally, catalyzes the hydrolytic cleavage of the carbon-nitrogen bond in imidazolone-5-propanoate to yield N-formimidoyl-L-glutamate. It is the third step in the universal histidine degradation pathway. The polypeptide is Imidazolonepropionase (Idiomarina loihiensis (strain ATCC BAA-735 / DSM 15497 / L2-TR)).